Reading from the N-terminus, the 392-residue chain is Transcription factor GATA-4 (392 aa).

Residues 75 to 113 form a disordered region; the sequence is SSAYNPGTSHPPVSPRFTFSSSPPITAPSSREVSYSSPL. Residues 91–113 show a composition bias toward polar residues; sequence FTFSSSPPITAPSSREVSYSSPL. 2 GATA-type zinc fingers span residues 184 to 208 and 238 to 262; these read CVNC…CNAC and CANC…CNAC. Disordered stretches follow at residues 279–339 and 359–392; these read KEGI…HSNS and MPSL…LVLA. Basic residues predominate over residues 284–293; the sequence is TRKRKPKNLS. Over residues 302–316 the composition is skewed to low complexity; the sequence is SGSDSLTPSTSSTNS. A compositionally biased stretch (polar residues) spans 364–380; the sequence is LSPQNHHSTFNPSPQAN.

Expressed at high levels in heart, small intestine, stomach, ovary, and liver. Found at much lower levels in lung, spleen, pancreas and skin.

It localises to the nucleus. Transcriptional activator that binds to the consensus sequence 5'-AGATAG-3'. Associated with cardiac specification and can regulate cardiac-specific transcription during embryogenesis. Activates the expression of cardiac MHC-alpha in vivo. The chain is Transcription factor GATA-4 (gata4) from Xenopus laevis (African clawed frog).